A 293-amino-acid polypeptide reads, in one-letter code: ESX-3 secretion-associated protein EspG3 (293 aa).

This sequence belongs to the EspG family.

The protein localises to the cytoplasm. This chain is ESX-3 secretion-associated protein EspG3, found in Mycolicibacterium smegmatis (strain ATCC 700084 / mc(2)155) (Mycobacterium smegmatis).